We begin with the raw amino-acid sequence, 449 residues long: Chromosomal replication initiator protein DnaA (449 aa).

The interval 1–73 is domain I, interacts with DnaA modulators; sequence MDADLKNLWD…ANSIKAVCSK (73 aa). Positions 73-110 are domain II; the sequence is KLYTIEFIIMSEIYEKEEIKSSSNQKSKAIVVNDEMSS. A domain III, AAA+ region region spans residues 111–327; sequence TLNPKYTFNS…GALIRIIAYS (217 aa). ATP contacts are provided by G155, G157, K158, and T159. Residues 328–449 form a domain IV, binds dsDNA region; the sequence is SLTNREVTVD…NDITKKLTQN (122 aa).

The protein belongs to the DnaA family. As to quaternary structure, oligomerizes as a right-handed, spiral filament on DNA at oriC.

The protein localises to the cytoplasm. Functionally, plays an essential role in the initiation and regulation of chromosomal replication. ATP-DnaA binds to the origin of replication (oriC) to initiate formation of the DNA replication initiation complex once per cell cycle. Binds the DnaA box (a 9 base pair repeat at the origin) and separates the double-stranded (ds)DNA. Forms a right-handed helical filament on oriC DNA; dsDNA binds to the exterior of the filament while single-stranded (ss)DNA is stabiized in the filament's interior. The ATP-DnaA-oriC complex binds and stabilizes one strand of the AT-rich DNA unwinding element (DUE), permitting loading of DNA polymerase. After initiation quickly degrades to an ADP-DnaA complex that is not apt for DNA replication. Binds acidic phospholipids. In Clostridium beijerinckii (strain ATCC 51743 / NCIMB 8052) (Clostridium acetobutylicum), this protein is Chromosomal replication initiator protein DnaA.